A 246-amino-acid polypeptide reads, in one-letter code: MGDGDSPMCLSAVSFKGIRCWLDKLLLWALTISITLQNAAVDCTRVENNELPSPNLNSSMNVVRMGQNVSLSCSTKNTSVDITYSLFWGTKYLESKRRRGGAVDFHLRISNANESGPYKCKVNVSNLMKYSQDFNFTMAKDESCPSCRLSLLLPGLLLGILVIVLVLAYLIHLKYKKGKKTQREDQSKGSGDAPAQDELYVNACKTQTEQPQEIHYATPVFKEMAPMEEEGGTDGKADYIYSELTH.

The first 33 residues, 1-33 (MGDGDSPMCLSAVSFKGIRCWLDKLLLWALTIS), serve as a signal peptide directing secretion. Over 34-150 (ITLQNAAVDC…DESCPSCRLS (117 aa)) the chain is Extracellular. Residues 52-131 (PSPNLNSSMN…VNVSNLMKYS (80 aa)) form the Ig-like C2-type domain. An N-linked (GlcNAc...) asparagine glycan is attached at Asn-68. Cys-73 and Cys-120 are joined by a disulfide. Residues 151-171 (LLLPGLLLGILVIVLVLAYLI) traverse the membrane as a helical segment. Over 172–246 (HLKYKKGKKT…ADYIYSELTH (75 aa)) the chain is Cytoplasmic. 2 short sequence motifs (ITIM motif) span residues 214 to 219 (IHYATP) and 239 to 244 (YIYSEL). 2 positions are modified to phosphotyrosine: Tyr-216 and Tyr-241.

Monomer. Interacts (tyrosine-phosphorylated) with PTPN6, PTPN11 and INPP5D. Post-translationally, N-glycosylated. In terms of tissue distribution, expressed in myeloid cells (dendritic cells, macrophages and neutrophils but not in T-cells, B-cells or natural killer cells) and mast cells (at protein level).

It localises to the cell membrane. The protein resides in the secreted. Immunoglobulin-like receptor which plays an inhibitory role in degranulation of mast cells. Negatively regulates IgE-mediated mast cell activation and suppresses the type I immediate hypersensitivity reaction. This Mus musculus (Mouse) protein is Allergin-1 (Milr1).